The chain runs to 87 residues: Small ribosomal subunit protein uS17 (87 aa).

This sequence belongs to the universal ribosomal protein uS17 family. Part of the 30S ribosomal subunit.

Functionally, one of the primary rRNA binding proteins, it binds specifically to the 5'-end of 16S ribosomal RNA. The chain is Small ribosomal subunit protein uS17 from Listeria innocua serovar 6a (strain ATCC BAA-680 / CLIP 11262).